The chain runs to 719 residues: Potassium-transporting ATPase ATP-binding subunit (719 aa).

Transmembrane regions (helical) follow at residues leucine 35–phenylalanine 55, valine 62–glutamate 82, isoleucine 228–glycine 248, and phenylalanine 254–methionine 274. Aspartate 318 functions as the 4-aspartylphosphate intermediate in the catalytic mechanism. ATP-binding residues include aspartate 355 and glutamate 359. The interval glycine 372–proline 396 is disordered. The span at lysine 373–serine 383 shows a compositional bias: polar residues. ATP contacts are provided by residues phenylalanine 416 to serine 423 and lysine 435. Aspartate 554 and aspartate 558 together coordinate Mg(2+). 3 consecutive transmembrane segments (helical) span residues phenylalanine 624–leucine 644, alanine 652–leucine 672, and leucine 698–phenylalanine 718.

It belongs to the cation transport ATPase (P-type) (TC 3.A.3) family. Type IA subfamily. The system is composed of three essential subunits: KdpA, KdpB and KdpC. The complex also contains KdpF, a small non-essential subunit.

Its subcellular location is the cell membrane. The enzyme catalyses K(+)(out) + ATP + H2O = K(+)(in) + ADP + phosphate + H(+). Functionally, part of the high-affinity ATP-driven potassium transport (or Kdp) system, which catalyzes the hydrolysis of ATP coupled with the electrogenic transport of potassium into the cytoplasm. This subunit is responsible for energy coupling to the transport system and for the release of the potassium ions to the cytoplasm. The Kdp system is essential for growth under K(+) limitation, and for survival under desiccation and salt crystal inclusion. This is Potassium-transporting ATPase ATP-binding subunit from Halobacterium salinarum (strain ATCC 29341 / DSM 671 / R1).